A 383-amino-acid chain; its full sequence is MSETALDLARALISCPSVTPQDGGTLGVLESRLKASGFRTHRLTFHEEGTPDIDNLYARFGSGAPCLVFAGHTDVVPVGTATDWRFDPFAAKVEDGQLWGRGAADMKGAIAAFTAAALTFIEQHKDFKGSIAFLITGDEEGPSINGTIKLLKWAAEQGEHFDHCIVGEPTNPQVLGDMIKIGRRGSLNGILSITGKQGHVAYPHRADNPVPKLMRLIEALIGTPLDEGTDHFDASNLEVVALSSGTDAYNVIPAKAEARFNIRFNDLWTPQTLELELLARLDSVAEGTAYTLTFEPCNALAFITKPDQFTDLVANAIEKQTGRRPELSTTGGTSDARFISAYCPVVEFGLVGQTMHMVDERVSVADIATLETIYTSILEGYFP.

His-72 serves as a coordination point for Zn(2+). Asp-74 is an active-site residue. Zn(2+) is bound at residue Asp-105. Glu-139 functions as the Proton acceptor in the catalytic mechanism. 3 residues coordinate Zn(2+): Glu-140, Glu-168, and His-356.

The protein belongs to the peptidase M20A family. DapE subfamily. As to quaternary structure, homodimer. Zn(2+) is required as a cofactor. Co(2+) serves as cofactor.

The enzyme catalyses N-succinyl-(2S,6S)-2,6-diaminopimelate + H2O = (2S,6S)-2,6-diaminopimelate + succinate. It functions in the pathway amino-acid biosynthesis; L-lysine biosynthesis via DAP pathway; LL-2,6-diaminopimelate from (S)-tetrahydrodipicolinate (succinylase route): step 3/3. Functionally, catalyzes the hydrolysis of N-succinyl-L,L-diaminopimelic acid (SDAP), forming succinate and LL-2,6-diaminopimelate (DAP), an intermediate involved in the bacterial biosynthesis of lysine and meso-diaminopimelic acid, an essential component of bacterial cell walls. The chain is Succinyl-diaminopimelate desuccinylase from Beijerinckia indica subsp. indica (strain ATCC 9039 / DSM 1715 / NCIMB 8712).